The chain runs to 593 residues: Brain-enriched guanylate kinase-associated protein (593 aa).

N-acetylmethionine is present on Met1. The residue at position 137 (Tyr137) is a Phosphotyrosine. A phosphoserine mark is found at Ser200, Ser229, Ser246, Ser265, Ser346, and Ser373. Arg381 is subject to Asymmetric dimethylarginine. A phosphoserine mark is found at Ser455, Ser465, Ser475, Ser477, Ser500, Ser502, Ser506, Ser553, and Ser563. Positions 499–593 are disordered; it reads LSLSPGRSAD…KAQLYGTLLN (95 aa).

In terms of assembly, interacts with DLG4 and DLGAP1 and forms a ternary complex.

Its subcellular location is the cytoplasm. It is found in the membrane. Its function is as follows. May sustain the structure of the postsynaptic density (PSD). This Homo sapiens (Human) protein is Brain-enriched guanylate kinase-associated protein (BEGAIN).